Consider the following 281-residue polypeptide: Putative phosphatase MPN_264 (281 aa).

D8 functions as the Nucleophile in the catalytic mechanism. D8 provides a ligand contact to Mg(2+). Phosphate is bound at residue L9. D10 contacts Mg(2+). Phosphate-binding positions include 44-45 (TG) and K205. The Mg(2+) site is built by D228 and S229. N231 is a binding site for phosphate.

This sequence belongs to the HAD-like hydrolase superfamily. Cof family. Mg(2+) serves as cofactor.

The chain is Putative phosphatase MPN_264 from Mycoplasma pneumoniae (strain ATCC 29342 / M129 / Subtype 1) (Mycoplasmoides pneumoniae).